The sequence spans 530 residues: Cation transporter HKT2;2 (530 aa).

Residues 1-40 (MTSIYQEFIHTKCQSFRSIGRYVLHSIVLIYRFVSLHVHP) lie on the Cytoplasmic side of the membrane. The next 2 membrane-spanning stretches (helical) occupy residues 41 to 61 (FWIQ…LLMF) and 102 to 122 (IVVL…FLGL). Residues 123 to 186 (MLRLKHKHNP…DLKRSKRLRW (64 aa)) lie on the Cytoplasmic side of the membrane. Helical transmembrane passes span 187-207 (FLGF…FLLV) and 260-280 (GLLL…PLFL). Residues 281–317 (RILIWFLGKVTKLKDLKLMIKNSDELQYDYLLPKLPT) lie on the Cytoplasmic side of the membrane. 2 helical membrane-spanning segments follow: residues 318 to 338 (AFLA…FGSV) and 372 to 392 (IDCS…MYLP). The Cytoplasmic portion of the chain corresponds to 393 to 420 (PSTTFALSNGDEKTANKKAKRKLGLVVR). 2 helical membrane-spanning segments follow: residues 421 to 441 (NLAF…LITE) and 494 to 514 (SLSG…MLYG). Residues 515–530 (RLKAFTKGTGEYWRLW) are Cytoplasmic-facing.

It belongs to the TrkH potassium transport family. HKT (TC 2.A.38.3) subfamily.

The protein localises to the membrane. In terms of biological role, seems to be involved in regulation of potassium-sodium homeostasis. Seems to act as a potassium-sodium cotransporter, which mediates increased potassium uptake under external sodium accumulation and contributes to salt-tolerance in cultivar indica Pokkali. This Oryza sativa subsp. indica (Rice) protein is Cation transporter HKT2;2.